An 86-amino-acid chain; its full sequence is Toxin Tpa6 (86 aa).

An N-terminal signal peptide occupies residues 1 to 20 (MSIFPIALALLLIGLEEGEA). The region spanning 22–85 (RDGYPLSKNN…WGDPGTKPCM (64 aa)) is the LCN-type CS-alpha/beta domain. Disulfide bonds link Cys-33/Cys-84, Cys-37/Cys-58, Cys-43/Cys-64, and Cys-47/Cys-66.

It belongs to the long (4 C-C) scorpion toxin superfamily. Sodium channel inhibitor family. Beta subfamily. Expressed by the venom gland.

The protein localises to the secreted. Beta toxins bind voltage-independently at site-4 of sodium channels (Nav) and shift the voltage of activation toward more negative potentials thereby affecting sodium channel activation and promoting spontaneous and repetitive firing. The chain is Toxin Tpa6 from Tityus pachyurus (Colombian scorpion).